Here is a 282-residue protein sequence, read N- to C-terminus: Shikimate dehydrogenase (NADP(+)) (282 aa).

Shikimate contacts are provided by residues 18–20 and Thr65; that span reads SRS. Lys69 (proton acceptor) is an active-site residue. Glu81 lines the NADP(+) pocket. Residues Asn90 and Asp105 each contribute to the shikimate site. NADP(+) is bound by residues 130-134, 154-159, and Met222; these read GAGGA and NRTPAR. Tyr224 lines the shikimate pocket. Gly245 contributes to the NADP(+) binding site.

The protein belongs to the shikimate dehydrogenase family. In terms of assembly, homodimer.

It catalyses the reaction shikimate + NADP(+) = 3-dehydroshikimate + NADPH + H(+). Its pathway is metabolic intermediate biosynthesis; chorismate biosynthesis; chorismate from D-erythrose 4-phosphate and phosphoenolpyruvate: step 4/7. Involved in the biosynthesis of the chorismate, which leads to the biosynthesis of aromatic amino acids. Catalyzes the reversible NADPH linked reduction of 3-dehydroshikimate (DHSA) to yield shikimate (SA). This is Shikimate dehydrogenase (NADP(+)) from Acidovorax ebreus (strain TPSY) (Diaphorobacter sp. (strain TPSY)).